The primary structure comprises 322 residues: AA9 family lytic polysaccharide monooxygenase B (322 aa).

A signal peptide spans 1–17 (MFSKSIIAASLLTAVTA). H18 contributes to the Cu(2+) binding site. N53 and N68 each carry an N-linked (GlcNAc...) asparagine glycan. C56 and C173 are disulfide-bonded. Position 87 (H87) interacts with Cu(2+). N-linked (GlcNAc...) asparagine glycosylation is found at N121 and N133. Residues H159 and Q168 each coordinate O2. Y170 is a binding site for Cu(2+). N197 is a glycosylation site (N-linked (GlcNAc...) asparagine).

Belongs to the polysaccharide monooxygenase AA9 family. Cu(2+) serves as cofactor.

Its subcellular location is the secreted. The catalysed reaction is [(1-&gt;4)-beta-D-glucosyl]n+m + reduced acceptor + O2 = 4-dehydro-beta-D-glucosyl-[(1-&gt;4)-beta-D-glucosyl]n-1 + [(1-&gt;4)-beta-D-glucosyl]m + acceptor + H2O.. Lytic polysaccharide monooxygenase (LPMO) that depolymerizes crystalline and amorphous polysaccharides via the oxidation of scissile alpha- or beta-(1-4)-glycosidic bonds, yielding C1 and C4 oxidation products. Catalysis by LPMOs requires the reduction of the active-site copper from Cu(II) to Cu(I) by a reducing agent and H(2)O(2) or O(2) as a cosubstrate. This chain is AA9 family lytic polysaccharide monooxygenase B, found in Botryotinia fuckeliana (strain B05.10) (Noble rot fungus).